Reading from the N-terminus, the 273-residue chain is 2,3,4,5-tetrahydropyridine-2,6-dicarboxylate N-succinyltransferase (273 aa).

Residues Arg-104 and Asp-141 each coordinate substrate.

The protein belongs to the transferase hexapeptide repeat family. As to quaternary structure, homotrimer.

The protein resides in the cytoplasm. The enzyme catalyses (S)-2,3,4,5-tetrahydrodipicolinate + succinyl-CoA + H2O = (S)-2-succinylamino-6-oxoheptanedioate + CoA. Its pathway is amino-acid biosynthesis; L-lysine biosynthesis via DAP pathway; LL-2,6-diaminopimelate from (S)-tetrahydrodipicolinate (succinylase route): step 1/3. This is 2,3,4,5-tetrahydropyridine-2,6-dicarboxylate N-succinyltransferase from Psychrobacter sp. (strain PRwf-1).